The sequence spans 315 residues: Acyl transferase (315 aa).

Residues Ser116, Asp213, and His243 each act as charge relay system in the active site.

The protein belongs to the LuxD family.

Its pathway is lipid metabolism; fatty acid reduction for biolumincescence. Functionally, acyl transferase is part of the fatty acid reductase system required for aldehyde biosynthesis; it produces fatty acids for the luminescent reaction. The protein is Acyl transferase of Photobacterium leiognathi.